The chain runs to 356 residues: 5-formaminoimidazole-4-carboxamide-1-(beta)-D-ribofuranosyl 5'-monophosphate synthetase 1 (356 aa).

5-amino-1-(5-phospho-beta-D-ribosyl)imidazole-4-carboxamide contacts are provided by histidine 27 and serine 94. In terms of domain architecture, ATP-grasp spans 101 to 333 (TENFAEMAVP…YADLIQEDLS (233 aa)). ATP contacts are provided by residues 145-196 (PRDI…TRYY) and glutamate 226. Asparagine 255 lines the 5-amino-1-(5-phospho-beta-D-ribosyl)imidazole-4-carboxamide pocket. Positions 293 and 306 each coordinate Mg(2+).

This sequence belongs to the phosphohexose mutase family. It depends on Mg(2+) as a cofactor. Mn(2+) serves as cofactor.

It carries out the reaction 5-amino-1-(5-phospho-beta-D-ribosyl)imidazole-4-carboxamide + formate + ATP = 5-formamido-1-(5-phospho-D-ribosyl)imidazole-4-carboxamide + ADP + phosphate. It participates in purine metabolism; IMP biosynthesis via de novo pathway; 5-formamido-1-(5-phospho-D-ribosyl)imidazole-4-carboxamide from 5-amino-1-(5-phospho-D-ribosyl)imidazole-4-carboxamide (formate route): step 1/1. Functionally, catalyzes the ATP- and formate-dependent formylation of 5-aminoimidazole-4-carboxamide-1-beta-d-ribofuranosyl 5'-monophosphate (AICAR) to 5-formaminoimidazole-4-carboxamide-1-beta-d-ribofuranosyl 5'-monophosphate (FAICAR) in the absence of folates. The sequence is that of 5-formaminoimidazole-4-carboxamide-1-(beta)-D-ribofuranosyl 5'-monophosphate synthetase 1 from Methanosarcina mazei (strain ATCC BAA-159 / DSM 3647 / Goe1 / Go1 / JCM 11833 / OCM 88) (Methanosarcina frisia).